The chain runs to 412 residues: MEPHRVLVLNSGSSSVKYQLLDMRDRSRLASGLVERIGEETSRLAHTPSAGGGAEPRERTGRIPDHDAALKAAAEELAADGLGLDSPELAAIGHRVVHGGLRFSAPTVITDEVLEEIERLVPVAPLHNPANITGIVTARALRPDLPQVAVFDTAFHTTMPEAAARYAIDVETADAHRIRRYGFHGTSHAYVSRKTAELLGRAPEDVNVIVLHLGNGASASAVAGGRCVDTSMGLTPLEGLVMGTRSGDIDPAVTFHLKRVAGMSADEIDVLLNQRSGLVGLCGDNDMRVIRRRIDEGDERAALAFDIYIHRLKKYIGAYTAVLGRVDAVAFTAGVGENAAPVREAAVAGLEELGMAVDASLNAVRSTEPRLISPEYARVAVAVVPTDEELEIAEQTFALVGDRGPRFGQVDN.

Asn-10 lines the Mg(2+) pocket. Residue Lys-17 participates in ATP binding. The segment at 40 to 61 is disordered; that stretch reads ETSRLAHTPSAGGGAEPRERTG. Substrate is bound at residue Arg-95. Asp-152 (proton donor/acceptor) is an active-site residue. ATP contacts are provided by residues 212–216, 286–288, and 334–338; these read HLGNG, DMR, and GVGEN. Glu-388 is a binding site for Mg(2+).

It belongs to the acetokinase family. In terms of assembly, homodimer. It depends on Mg(2+) as a cofactor. Requires Mn(2+) as cofactor.

It localises to the cytoplasm. It catalyses the reaction acetate + ATP = acetyl phosphate + ADP. The protein operates within metabolic intermediate biosynthesis; acetyl-CoA biosynthesis; acetyl-CoA from acetate: step 1/2. Its function is as follows. Catalyzes the formation of acetyl phosphate from acetate and ATP. Can also catalyze the reverse reaction. The protein is Acetate kinase of Streptomyces griseus subsp. griseus (strain JCM 4626 / CBS 651.72 / NBRC 13350 / KCC S-0626 / ISP 5235).